The sequence spans 180 residues: Large ribosomal subunit protein bL19 (180 aa).

It belongs to the bacterial ribosomal protein bL19 family.

This protein is located at the 30S-50S ribosomal subunit interface and may play a role in the structure and function of the aminoacyl-tRNA binding site. This is Large ribosomal subunit protein bL19 from Allorhizobium ampelinum (strain ATCC BAA-846 / DSM 112012 / S4) (Agrobacterium vitis (strain S4)).